The following is a 1508-amino-acid chain: Pleiotropic ABC efflux transporter of multiple drugs CDR1 (1508 aa).

The tract at residues 1–30 (MSEKPFVDAPPPEDGVAHQVSPHDNGSLSE) is disordered. The Cytoplasmic portion of the chain corresponds to 1–524 (MSEKPFVDAP…NFLRMKGDPS (524 aa)). An ABC transporter 1 domain is found at 165–415 (DYWHDMRKID…FLDMGYECPQ (251 aa)). The chain crosses the membrane as a helical span at residues 525–545 (IVIFSIFGQGVMGLILSSVFY). The Extracellular segment spans residues 546 to 559 (NLQPTTGSFYYRGA). Residues 560–580 (AMFFAVLFNAFASLLEIMSLF) form a helical membrane-spanning segment. At 581–608 (EARPIVEKHKKYALYRPSADALASIISE) the chain is on the cytoplasmic side. A helical membrane pass occupies residues 609–629 (LPVKLCMSTCFNFSFYFMVHF). The Extracellular segment spans residues 630-633 (RRDP). Residues 634–654 (GRFFFYWLFCGLCTLCMSHMF) traverse the membrane as a helical segment. Topologically, residues 655-673 (RSLGAVSTSLAAAMTPATS) are cytoplasmic. The helical transmembrane segment at 674–694 (VLLAMVIFTGFVIPIPSMLGW) threads the bilayer. The Extracellular segment spans residues 695-775 (CRWIQYINPV…EYVNAHKWRN (81 aa)). The helical transmembrane segment at 776–796 (LGIVVAYIVVFLGVYIALTEF) threads the bilayer. Over 797-1203 (NKGAMQKGEI…TFQQYWRSPG (407 aa)) the chain is Cytoplasmic. The interval 839-860 (KISYSDAMEKDSGESSTSDDKL) is disordered. A compositionally biased stretch (basic and acidic residues) spans 845-860 (AMEKDSGESSTSDDKL). An ABC transporter 2 domain is found at 867–1110 (FHWKDLTYQV…GLIDYFEKHG (244 aa)). 903–910 (GASGAGKT) contacts ATP. The chain crosses the membrane as a helical span at residues 1204 to 1224 (YIYSKFFLVITASLFNGFAFF). The Extracellular segment spans residues 1225-1239 (HSGTSQQGLQNQMFS). Residues 1240-1260 (MFMFYMPLQTLIQQMLPYYVM) traverse the membrane as a helical segment. Residues 1261–1288 (QREIYEVREAPSRTFSWFAFIASQITTE) lie on the Cytoplasmic side of the membrane. The chain crosses the membrane as a helical span at residues 1289 to 1309 (IPFQVVLGTVAFFCWYYPVGL). Topologically, residues 1310–1326 (YQNATPTDTVHERGALM) are extracellular. The helical transmembrane segment at 1327-1347 (WLLVTAFYVYTISLGQMVVAF) threads the bilayer. The Cytoplasmic portion of the chain corresponds to 1348–1362 (MEIADNAANMVNLMF). The helical transmembrane segment at 1363–1383 (IMCLNFCGVLATPEALPGFWI) threads the bilayer. Residues 1384–1475 (FMYRCNPFTY…HAVYSERWRN (92 aa)) are Extracellular-facing. Residues 1476 to 1496 (FGIFIAFIAINMIGTIFFYWL) traverse the membrane as a helical segment. The Cytoplasmic segment spans residues 1497–1508 (ARVPKSSKSKNH).

Belongs to the ABC transporter superfamily.

Its subcellular location is the cell membrane. The catalysed reaction is fluconazole(in) + ATP + H2O = fluconazole(out) + ADP + phosphate + H(+). It carries out the reaction itraconazole(in) + ATP + H2O = itraconazole(out) + ADP + phosphate + H(+). It catalyses the reaction voriconazole(in) + ATP + H2O = voriconazole(out) + ADP + phosphate + H(+). The bis-benzodioxolylindolinone azoffluxin acts as an inhibitor of the transporter activity. Clorgyline analogs M19 and M25 inhibit the transcporter activity by uncoupling CDR1 ATPase activity from the active transport of substrates. Activity is also inhibited by beauvericin and oligomycin. Pleiotropic ABC efflux transporter that confers resistance to numerous chemicals including itraconazole, fluconazole, voriconazole and posaconazole. The protein is Pleiotropic ABC efflux transporter of multiple drugs CDR1 of Candidozyma auris (Yeast).